Consider the following 326-residue polypeptide: Vestitone reductase (326 aa).

NADP(+) is bound by residues 12–18, R37, and Y164; that span reads GGTGFLG.

This sequence belongs to the NAD(P)-dependent epimerase/dehydratase family. Dihydroflavonol-4-reductase subfamily. As to quaternary structure, monomer. As to expression, detected in roots, and at lower levels in root nodules. Not detected in petioles, leaf and stem.

It catalyses the reaction a (3R,4R)-4,2'-dihydroxyisoflavan + NADP(+) = a (3R)-2'-hydroxyisoflavanone + NADPH + H(+). Inhibited by vestitone concentrations above 50 uM. Stereospecific enzyme that catalyzes the NADPH-dependent reduction of (3R)-vestitone to (3R,4R)-4'-methoxyisoflavan-2',4,7-triol (DMI). Has no activity with (3S)-vestitone. Catalyzes the penultimate step in the biosynthesis of the phytoalexin medicarpin, and thereby contributes to plant defense reactions. The polypeptide is Vestitone reductase (Medicago sativa (Alfalfa)).